Consider the following 120-residue polypeptide: Large ribosomal subunit protein uL18 (120 aa).

The protein belongs to the universal ribosomal protein uL18 family. In terms of assembly, part of the 50S ribosomal subunit; part of the 5S rRNA/L5/L18/L25 subcomplex. Contacts the 5S and 23S rRNAs.

Its function is as follows. This is one of the proteins that bind and probably mediate the attachment of the 5S RNA into the large ribosomal subunit, where it forms part of the central protuberance. This Hyphomonas neptunium (strain ATCC 15444) protein is Large ribosomal subunit protein uL18.